Here is a 95-residue protein sequence, read N- to C-terminus: Small ribosomal subunit protein bS6 (95 aa).

It belongs to the bacterial ribosomal protein bS6 family.

Its function is as follows. Binds together with bS18 to 16S ribosomal RNA. The chain is Small ribosomal subunit protein bS6 from Clostridium kluyveri (strain NBRC 12016).